Consider the following 460-residue polypeptide: Nitrogenase iron-iron protein beta chain (460 aa).

4 residues coordinate [8Fe-7S] cluster: Cys-20, Cys-45, Cys-104, and Ser-143.

This sequence belongs to the NifD/NifK/NifE/NifN family. As to quaternary structure, hexamer of two alpha, two beta, and two delta chains. The cofactor is [8Fe-7S] cluster.

It carries out the reaction N2 + 8 reduced [2Fe-2S]-[ferredoxin] + 16 ATP + 16 H2O = H2 + 8 oxidized [2Fe-2S]-[ferredoxin] + 2 NH4(+) + 16 ADP + 16 phosphate + 6 H(+). Its function is as follows. This iron-iron protein is part of the nitrogenase complex that catalyzes the key enzymatic reactions in nitrogen fixation. Other nitrogenase complexes utilize a molybdenum-iron protein or a vanadium-iron protein. The protein is Nitrogenase iron-iron protein beta chain (anfK) of Rhodobacter capsulatus (Rhodopseudomonas capsulata).